A 906-amino-acid polypeptide reads, in one-letter code: Probable RNA-directed DNA polymerase from transposon BS (906 aa).

Residues 482 to 758 form the Reverse transcriptase domain; sequence AILRVQFFPK…SQAKYLGITL (277 aa).

The cofactor is Mg(2+). It depends on Mn(2+) as a cofactor.

The enzyme catalyses DNA(n) + a 2'-deoxyribonucleoside 5'-triphosphate = DNA(n+1) + diphosphate. The chain is Probable RNA-directed DNA polymerase from transposon BS from Drosophila melanogaster (Fruit fly).